Consider the following 430-residue polypeptide: DNA repair protein recA homolog 3, mitochondrial (430 aa).

A mitochondrion-targeting transit peptide spans 1–35 (MARILRNVYSLRSSLFSSELLRRSVVGTSFQLRGF). 119–126 (GPEASGKT) is a binding site for ATP. A disordered region spans residues 385 to 415 (DEAADKETESESEEEDSLRVVVSPDNTDDES).

The protein belongs to the RecA family.

It is found in the mitochondrion. Its function is as follows. Involved in recombination ability and DNA strand transfer activity. This is DNA repair protein recA homolog 3, mitochondrial from Arabidopsis thaliana (Mouse-ear cress).